The chain runs to 169 residues: Disulfide bond formation protein B (169 aa).

The Cytoplasmic portion of the chain corresponds to 1–8; sequence MRLSVRWV. A helical membrane pass occupies residues 9 to 25; sequence FFLGFFLCALMLAIAGY. The Periplasmic portion of the chain corresponds to 26–43; the sequence is FQFVENLEPCPLCILSRV. A disulfide bridge links Cys35 with Cys38. The chain crosses the membrane as a helical span at residues 44–60; sequence AVLAIGGVFLVAALHNP. Residues 61–67 are Cytoplasmic-facing; sequence KSWGIKV. The chain crosses the membrane as a helical span at residues 68-84; sequence YALLGFVVTLIGIGITG. Topologically, residues 85–141 are periplasmic; sequence RHVWLQSLPADQVPACGPGLNFMLDNFPLTETLELVFRGSGECAEVQWSFLGLTIPG. Cys100 and Cys127 are oxidised to a cystine. The helical transmembrane segment at 142–160 threads the bilayer; it reads WTLVAFLFLGVISLWQMGR. At 161–169 the chain is on the cytoplasmic side; sequence TGGGAGKLT.

It belongs to the DsbB family.

The protein resides in the cell inner membrane. Required for disulfide bond formation in some periplasmic proteins. Acts by oxidizing the DsbA protein. The chain is Disulfide bond formation protein B from Nitrosococcus oceani (strain ATCC 19707 / BCRC 17464 / JCM 30415 / NCIMB 11848 / C-107).